The chain runs to 116 residues: UPF0102 protein PERMA_0362 (116 aa).

It belongs to the UPF0102 family.

This Persephonella marina (strain DSM 14350 / EX-H1) protein is UPF0102 protein PERMA_0362.